A 347-amino-acid chain; its full sequence is Sensor protein VraS (347 aa).

2 consecutive transmembrane segments (helical) span residues 13-33 (ILVY…VNII) and 43-63 (IFGI…CIIV). The Histidine kinase domain occupies 150-341 (RLARELHDSV…RIEVKAPLNK (192 aa)). Histidine 156 is modified (phosphohistidine).

Autophosphorylated on His-156.

It is found in the cell membrane. It catalyses the reaction ATP + protein L-histidine = ADP + protein N-phospho-L-histidine.. Its function is as follows. Member of the two-component regulatory system PprA/PprB involved in biofilm formation by controlling the expression of many related genes including type IVb pili major subunit flp pilin, adhesin bapA or cupE fimbriae. Also modulates quorum-sensing signal production acting on both negative and positive modulators. Functions as a heme sensor histidine kinase which is autophosphorylated at a histidine residue and transfers its phosphate group to PprB. The polypeptide is Sensor protein VraS (vraS) (Staphylococcus aureus (strain COL)).